Reading from the N-terminus, the 372-residue chain is Homoserine O-acetyltransferase (372 aa).

The 311-residue stretch at 43–353 (NAILIFHALT…DKGHDSFLLK (311 aa)) folds into the AB hydrolase-1 domain. Ser-148 functions as the Nucleophile in the catalytic mechanism. Arg-218 contributes to the substrate binding site. Active-site residues include Asp-314 and His-347. Asp-348 contacts substrate.

Belongs to the AB hydrolase superfamily. MetX family. As to quaternary structure, homodimer.

It localises to the cytoplasm. The catalysed reaction is L-homoserine + acetyl-CoA = O-acetyl-L-homoserine + CoA. It participates in amino-acid biosynthesis; L-methionine biosynthesis via de novo pathway; O-acetyl-L-homoserine from L-homoserine: step 1/1. In terms of biological role, transfers an acetyl group from acetyl-CoA to L-homoserine, forming acetyl-L-homoserine. In Pelagibacter ubique (strain HTCC1062), this protein is Homoserine O-acetyltransferase.